We begin with the raw amino-acid sequence, 449 residues long: UDP-N-acetylmuramoylalanine--D-glutamate ligase (449 aa).

ATP is bound at residue 118 to 124 (GTNGKTT).

This sequence belongs to the MurCDEF family.

It is found in the cytoplasm. The enzyme catalyses UDP-N-acetyl-alpha-D-muramoyl-L-alanine + D-glutamate + ATP = UDP-N-acetyl-alpha-D-muramoyl-L-alanyl-D-glutamate + ADP + phosphate + H(+). It functions in the pathway cell wall biogenesis; peptidoglycan biosynthesis. Functionally, cell wall formation. Catalyzes the addition of glutamate to the nucleotide precursor UDP-N-acetylmuramoyl-L-alanine (UMA). The chain is UDP-N-acetylmuramoylalanine--D-glutamate ligase from Staphylococcus haemolyticus (strain JCSC1435).